We begin with the raw amino-acid sequence, 384 residues long: N-acetylneuraminate epimerase (384 aa).

An N-terminal signal peptide occupies residues 1–24; that stretch reads MNMKTLLTYATLLSVTAFSHVVYA. Kelch repeat units follow at residues 46 to 90, 92 to 145, 147 to 184, 185 to 230, 233 to 281, 303 to 352, and 354 to 383; these read KVYV…SVIG, YIYL…YSPD, RQIL…RIVD, DYMG…VIEG, VTLI…VAGA, QAFE…TTSE, and VLIV…VEVI. Glutamate 239 functions as the Proton acceptor in the catalytic mechanism.

The protein belongs to the NanM family. Homodimer.

It localises to the periplasm. The catalysed reaction is N-acetyl-alpha-neuraminate = N-acetyl-beta-neuraminate. In terms of biological role, converts alpha-N-acetylneuranimic acid (Neu5Ac) to the beta-anomer, accelerating the equilibrium between the alpha- and beta-anomers. Probably facilitates sialidase-negative bacteria to compete successfully for limited amounts of extracellular Neu5Ac, which is likely taken up in the beta-anomer. In addition, the rapid removal of sialic acid from solution might be advantageous to the bacterium to damp down host responses. This is N-acetylneuraminate epimerase from Vibrio cholerae serotype O1 (strain ATCC 39315 / El Tor Inaba N16961).